The sequence spans 536 residues: GMP synthase [glutamine-hydrolyzing] (536 aa).

The region spanning arginine 19–serine 212 is the Glutamine amidotransferase type-1 domain. Catalysis depends on cysteine 96, which acts as the Nucleophile. Catalysis depends on residues histidine 186 and glutamate 188. In terms of domain architecture, GMPS ATP-PPase spans tryptophan 213–arginine 411. Serine 240 to serine 246 contacts ATP.

Homodimer.

It catalyses the reaction XMP + L-glutamine + ATP + H2O = GMP + L-glutamate + AMP + diphosphate + 2 H(+). Its pathway is purine metabolism; GMP biosynthesis; GMP from XMP (L-Gln route): step 1/1. Catalyzes the synthesis of GMP from XMP. This chain is GMP synthase [glutamine-hydrolyzing], found in Psychrobacter arcticus (strain DSM 17307 / VKM B-2377 / 273-4).